We begin with the raw amino-acid sequence, 608 residues long: UvrABC system protein C (608 aa).

The GIY-YIG domain maps to 16–94 (NRPGVYRMFD…IKEWRPPYNI (79 aa)). The UVR domain maps to 204 to 239 (NALADELNTGMEQAAMRLDFEKAAELRDQVAILRRV).

The protein belongs to the UvrC family. In terms of assembly, interacts with UvrB in an incision complex.

It is found in the cytoplasm. The UvrABC repair system catalyzes the recognition and processing of DNA lesions. UvrC both incises the 5' and 3' sides of the lesion. The N-terminal half is responsible for the 3' incision and the C-terminal half is responsible for the 5' incision. This is UvrABC system protein C from Pseudomonas paraeruginosa (strain DSM 24068 / PA7) (Pseudomonas aeruginosa (strain PA7)).